The following is a 160-amino-acid chain: Cyclic pyranopterin monophosphate synthase (160 aa).

Residues 77–79 (MCH) and 114–115 (ME) each bind substrate. The active site involves Asp-129.

It belongs to the MoaC family. As to quaternary structure, homohexamer; trimer of dimers.

It catalyses the reaction (8S)-3',8-cyclo-7,8-dihydroguanosine 5'-triphosphate = cyclic pyranopterin phosphate + diphosphate. The protein operates within cofactor biosynthesis; molybdopterin biosynthesis. Its function is as follows. Catalyzes the conversion of (8S)-3',8-cyclo-7,8-dihydroguanosine 5'-triphosphate to cyclic pyranopterin monophosphate (cPMP). This Listeria monocytogenes serotype 4a (strain HCC23) protein is Cyclic pyranopterin monophosphate synthase.